The following is a 265-amino-acid chain: Cytochrome c oxidase subunit 3 (265 aa).

Transmembrane regions (helical) follow at residues G41–W61, G85–F105, T137–G157, A162–M182, F200–V220, and W245–I265.

This sequence belongs to the cytochrome c oxidase subunit 3 family. In terms of assembly, component of the cytochrome c oxidase (complex IV, CIV), a multisubunit enzyme composed of a catalytic core of 3 subunits and several supernumerary subunits. The complex exists as a monomer or a dimer and forms supercomplexes (SCs) in the inner mitochondrial membrane with ubiquinol-cytochrome c oxidoreductase (cytochrome b-c1 complex, complex III, CIII).

It localises to the mitochondrion inner membrane. The enzyme catalyses 4 Fe(II)-[cytochrome c] + O2 + 8 H(+)(in) = 4 Fe(III)-[cytochrome c] + 2 H2O + 4 H(+)(out). In terms of biological role, component of the cytochrome c oxidase, the last enzyme in the mitochondrial electron transport chain which drives oxidative phosphorylation. The respiratory chain contains 3 multisubunit complexes succinate dehydrogenase (complex II, CII), ubiquinol-cytochrome c oxidoreductase (cytochrome b-c1 complex, complex III, CIII) and cytochrome c oxidase (complex IV, CIV), that cooperate to transfer electrons derived from NADH and succinate to molecular oxygen, creating an electrochemical gradient over the inner membrane that drives transmembrane transport and the ATP synthase. Cytochrome c oxidase is the component of the respiratory chain that catalyzes the reduction of oxygen to water. Electrons originating from reduced cytochrome c in the intermembrane space (IMS) are transferred via the dinuclear copper A center (CU(A)) of subunit 2 and heme A of subunit 1 to the active site in subunit 1, a binuclear center (BNC) formed by heme A3 and copper B (CU(B)). The BNC reduces molecular oxygen to 2 water molecules using 4 electrons from cytochrome c in the IMS and 4 protons from the mitochondrial matrix. The sequence is that of Cytochrome c oxidase subunit 3 (COX3) from Triticum aestivum (Wheat).